A 181-amino-acid chain; its full sequence is MPKCDYCDVYLTHDSMSVRKAHNSGRNHLRNVVDYYQQIGHEKAQSVIDSITSSYAAEGQSSSNPMLHNPAAATPFPPFPPANFPGGVPPPFPPASGPGGMPFPPPGARGFPMPPLPGQPGAPPMPPFPGMPAGMPFPPPGGLPPNFQFPIPPPGGFPGMPPPGQGFPGMPPPGGNHDERR.

Residues 2 to 34 (PKCDYCDVYLTHDSMSVRKAHNSGRNHLRNVVD) form a Matrin-type zinc finger. Pro residues-rich tracts occupy residues 129-143 (PGMP…PGGL) and 150-174 (PIPP…PPPG). Residues 129–181 (PGMPAGMPFPPPGGLPPNFQFPIPPPGGFPGMPPPGQGFPGMPPPGGNHDERR) form a disordered region.

It belongs to the U1 small nuclear ribonucleoprotein C family. In terms of assembly, U1 snRNP is composed of the 7 core Sm proteins B/B', D1, D2, D3, E, F and G that assemble in a heptameric protein ring on the Sm site of the small nuclear RNA to form the core snRNP, and at least 3 U1 snRNP-specific proteins U1-70K, U1-A and U1-C. U1-C interacts with U1 snRNA and the 5' splice-site region of the pre-mRNA.

The protein resides in the nucleus. Component of the spliceosomal U1 snRNP, which is essential for recognition of the pre-mRNA 5' splice-site and the subsequent assembly of the spliceosome. U1-C is directly involved in initial 5' splice-site recognition for both constitutive and regulated alternative splicing. The interaction with the 5' splice-site seems to precede base-pairing between the pre-mRNA and the U1 snRNA. Stimulates commitment or early (E) complex formation by stabilizing the base pairing of the 5' end of the U1 snRNA and the 5' splice-site region. The protein is U1 small nuclear ribonucleoprotein C of Sclerotinia sclerotiorum (strain ATCC 18683 / 1980 / Ss-1) (White mold).